The sequence spans 195 residues: NADH-quinone oxidoreductase subunit B (195 aa).

4 residues coordinate [4Fe-4S] cluster: cysteine 74, cysteine 75, cysteine 139, and cysteine 169.

This sequence belongs to the complex I 20 kDa subunit family. As to quaternary structure, NDH-1 is composed of 14 different subunits. Subunits NuoB, C, D, E, F, and G constitute the peripheral sector of the complex. [4Fe-4S] cluster serves as cofactor.

It is found in the cell inner membrane. The enzyme catalyses a quinone + NADH + 5 H(+)(in) = a quinol + NAD(+) + 4 H(+)(out). Its function is as follows. NDH-1 shuttles electrons from NADH, via FMN and iron-sulfur (Fe-S) centers, to quinones in the respiratory chain. The immediate electron acceptor for the enzyme in this species is believed to be ubiquinone. Couples the redox reaction to proton translocation (for every two electrons transferred, four hydrogen ions are translocated across the cytoplasmic membrane), and thus conserves the redox energy in a proton gradient. In Methylobacterium radiotolerans (strain ATCC 27329 / DSM 1819 / JCM 2831 / NBRC 15690 / NCIMB 10815 / 0-1), this protein is NADH-quinone oxidoreductase subunit B.